The sequence spans 104 residues: Urease subunit beta (104 aa).

It belongs to the urease beta subunit family. As to quaternary structure, heterotrimer of UreA (gamma), UreB (beta) and UreC (alpha) subunits. Three heterotrimers associate to form the active enzyme.

Its subcellular location is the cytoplasm. It catalyses the reaction urea + 2 H2O + H(+) = hydrogencarbonate + 2 NH4(+). It functions in the pathway nitrogen metabolism; urea degradation; CO(2) and NH(3) from urea (urease route): step 1/1. In Synechococcus sp. (strain RCC307), this protein is Urease subunit beta.